A 126-amino-acid polypeptide reads, in one-letter code: Acidic phospholipase A2 3 (126 aa).

Residues 1–7 constitute a propeptide that is removed on maturation; that stretch reads SNRPMPL. 7 disulfides stabilise this stretch: Cys18/Cys78, Cys33/Cys125, Cys35/Cys51, Cys50/Cys106, Cys57/Cys99, Cys67/Cys92, and Cys85/Cys97. Residues Tyr34, Gly36, and Gly38 each contribute to the Ca(2+) site. His54 is an active-site residue. Asp55 is a binding site for Ca(2+). Residue Asp100 is part of the active site.

It belongs to the phospholipase A2 family. Group I subfamily. D49 sub-subfamily. The cofactor is Ca(2+). Expressed by the venom gland.

The protein localises to the secreted. The catalysed reaction is a 1,2-diacyl-sn-glycero-3-phosphocholine + H2O = a 1-acyl-sn-glycero-3-phosphocholine + a fatty acid + H(+). In terms of biological role, PLA2 catalyzes the calcium-dependent hydrolysis of the 2-acyl groups in 3-sn-phosphoglycerides. The chain is Acidic phospholipase A2 3 from Naja sagittifera (Andaman cobra).